Here is a 368-residue protein sequence, read N- to C-terminus: tRNA 2-selenouridine synthase (368 aa).

The Rhodanese domain occupies 15-138; that stretch reads FLNQHPIMDV…MRQYLIGVIE (124 aa). The active-site S-selanylcysteine intermediate is cysteine 98.

This sequence belongs to the SelU family. Monomer.

It carries out the reaction 5-methylaminomethyl-2-thiouridine(34) in tRNA + selenophosphate + (2E)-geranyl diphosphate + H2O + H(+) = 5-methylaminomethyl-2-selenouridine(34) in tRNA + (2E)-thiogeraniol + phosphate + diphosphate. The enzyme catalyses 5-methylaminomethyl-2-thiouridine(34) in tRNA + (2E)-geranyl diphosphate = 5-methylaminomethyl-S-(2E)-geranyl-thiouridine(34) in tRNA + diphosphate. It catalyses the reaction 5-methylaminomethyl-S-(2E)-geranyl-thiouridine(34) in tRNA + selenophosphate + H(+) = 5-methylaminomethyl-2-(Se-phospho)selenouridine(34) in tRNA + (2E)-thiogeraniol. The catalysed reaction is 5-methylaminomethyl-2-(Se-phospho)selenouridine(34) in tRNA + H2O = 5-methylaminomethyl-2-selenouridine(34) in tRNA + phosphate. In terms of biological role, involved in the post-transcriptional modification of the uridine at the wobble position (U34) of tRNA(Lys), tRNA(Glu) and tRNA(Gln). Catalyzes the conversion of 2-thiouridine (S2U-RNA) to 2-selenouridine (Se2U-RNA). Acts in a two-step process involving geranylation of 2-thiouridine (S2U) to S-geranyl-2-thiouridine (geS2U) and subsequent selenation of the latter derivative to 2-selenouridine (Se2U) in the tRNA chain. The polypeptide is tRNA 2-selenouridine synthase (Shewanella baltica (strain OS155 / ATCC BAA-1091)).